The chain runs to 346 residues: Probable RNA methyltransferase PA14_40730 (346 aa).

The active-site Proton acceptor is Glu-91. The Radical SAM core domain maps to 94 to 320 (LLPRGGLCVS…TKVRNSAGQD (227 aa)). Cysteines 101 and 325 form a disulfide. Positions 108, 112, and 115 each coordinate [4Fe-4S] cluster. S-adenosyl-L-methionine-binding positions include 153-154 (GE), Ser-183, 206-208 (SLH), and Asn-282. Cys-325 (S-methylcysteine intermediate) is an active-site residue.

It belongs to the radical SAM superfamily. RlmN family. It depends on [4Fe-4S] cluster as a cofactor.

The protein resides in the cytoplasm. The polypeptide is Probable RNA methyltransferase PA14_40730 (Pseudomonas aeruginosa (strain UCBPP-PA14)).